The chain runs to 564 residues: Kelch-like protein 12 (564 aa).

Residues 29–96 (CDITLRVEGT…VYTETVLVTV (68 aa)) enclose the BTB domain. Residues 131 to 232 (CLGIRDFAET…LTPRYITDVI (102 aa)) form the BACK domain. 6 Kelch repeats span residues 278–325 (VLLV…ALND), 327–375 (VYVI…TLGD), 376–422 (MIYV…VASG), 423–469 (LIYC…LLND), 471–516 (IYVV…VLRG), and 518–563 (LYAI…VLRE).

As to quaternary structure, component of the BCR(KLHL12) E3 ubiquitin ligase complex.

Its subcellular location is the cytoplasmic vesicle. It localises to the COPII-coated vesicle. The protein operates within protein modification; protein ubiquitination. Its function is as follows. Substrate-specific adapter of a BCR (BTB-CUL3-RBX1) E3 ubiquitin ligase complex that acts as a negative regulator of Wnt signaling pathway and ER-Golgi transport. The BCR(KLHL12) complex is involved in ER-Golgi transport by regulating the size of COPII coats, thereby playing a key role in collagen export, which is required for embryonic stem (ES) cells division. Negatively regulates the Wnt signaling pathway, possibly via the targeted ubiquitination and subsequent proteolysis of dvl2 and dvl3. Regulates convergent-extension movements during early embryonic development. In Danio rerio (Zebrafish), this protein is Kelch-like protein 12 (klhl12).